The primary structure comprises 427 residues: tRNA(Ile)-lysidine synthase (427 aa).

25–30 (SGGLDS) contributes to the ATP binding site.

It belongs to the tRNA(Ile)-lysidine synthase family.

The protein localises to the cytoplasm. It catalyses the reaction cytidine(34) in tRNA(Ile2) + L-lysine + ATP = lysidine(34) in tRNA(Ile2) + AMP + diphosphate + H(+). Its function is as follows. Ligates lysine onto the cytidine present at position 34 of the AUA codon-specific tRNA(Ile) that contains the anticodon CAU, in an ATP-dependent manner. Cytidine is converted to lysidine, thus changing the amino acid specificity of the tRNA from methionine to isoleucine. This is tRNA(Ile)-lysidine synthase from Histophilus somni (strain 2336) (Haemophilus somnus).